The chain runs to 1071 residues: DNA-directed RNA polymerase subunit beta (1071 aa).

The protein belongs to the RNA polymerase beta chain family. In plastids the minimal PEP RNA polymerase catalytic core is composed of four subunits: alpha, beta, beta', and beta''. When a (nuclear-encoded) sigma factor is associated with the core the holoenzyme is formed, which can initiate transcription.

The protein resides in the plastid. The protein localises to the chloroplast. It carries out the reaction RNA(n) + a ribonucleoside 5'-triphosphate = RNA(n+1) + diphosphate. Functionally, DNA-dependent RNA polymerase catalyzes the transcription of DNA into RNA using the four ribonucleoside triphosphates as substrates. This Acorus calamus (Sweet flag) protein is DNA-directed RNA polymerase subunit beta.